We begin with the raw amino-acid sequence, 114 residues long: Nascent polypeptide-associated complex protein (114 aa).

In terms of domain architecture, NAC-A/B spans 5 to 69; the sequence is PSQFKNLERM…AKEAQKEEPK (65 aa).

It belongs to the NAC-alpha family. In terms of assembly, homodimer. Interacts with the ribosome. Binds ribosomal RNA.

In terms of biological role, contacts the emerging nascent chain on the ribosome. This Sulfurisphaera tokodaii (strain DSM 16993 / JCM 10545 / NBRC 100140 / 7) (Sulfolobus tokodaii) protein is Nascent polypeptide-associated complex protein.